We begin with the raw amino-acid sequence, 311 residues long: Putative methylthioribose-1-phosphate isomerase (311 aa).

Residues 46 to 48, Arg-80, and Gln-174 contribute to the substrate site; that span reads RGA. Catalysis depends on Asp-215, which acts as the Proton donor. Position 224 to 225 (224 to 225) interacts with substrate; that stretch reads NK.

The protein belongs to the eIF-2B alpha/beta/delta subunits family. MtnA subfamily.

It catalyses the reaction 5-(methylsulfanyl)-alpha-D-ribose 1-phosphate = 5-(methylsulfanyl)-D-ribulose 1-phosphate. Catalyzes the interconversion of methylthioribose-1-phosphate (MTR-1-P) into methylthioribulose-1-phosphate (MTRu-1-P). The sequence is that of Putative methylthioribose-1-phosphate isomerase from Methanothermobacter thermautotrophicus (strain ATCC 29096 / DSM 1053 / JCM 10044 / NBRC 100330 / Delta H) (Methanobacterium thermoautotrophicum).